We begin with the raw amino-acid sequence, 101 residues long: Small ribosomal subunit protein bS18c (101 aa).

Residues 1–19 (MDKSKQLFRKSKGSFRRRL) are compositionally biased toward basic residues. A disordered region spans residues 1–23 (MDKSKQLFRKSKGSFRRRLPPIG).

This sequence belongs to the bacterial ribosomal protein bS18 family. Part of the 30S ribosomal subunit.

The protein localises to the plastid. It localises to the chloroplast. This is Small ribosomal subunit protein bS18c from Acorus gramineus (Dwarf sweet flag).